The chain runs to 20 residues: Protein C activator (20 aa).

The Peptidase S1 domain occupies 1 to 20; the sequence is VVGGDECNINEHRSLALMYA.

This sequence belongs to the peptidase S1 family. Snake venom subfamily. Monomer. In terms of processing, glycosylated. As to expression, expressed by the venom gland.

The protein localises to the secreted. With respect to regulation, inhibited by calcium. Snake venom serine protease that selectively cleaves the heavy chain of protein C (PROC). This activation is thrombomodulin-independent. This Agkistrodon bilineatus (Cantil) protein is Protein C activator.